Here is a 96-residue protein sequence, read N- to C-terminus: Large ribosomal subunit protein bL27 (96 aa).

The propeptide occupies 1-11 (MLKTLENLQLF). The disordered stretch occupies residues 13–36 (HKKGGGSTSNGRDSQAKRLGAKAA).

It belongs to the bacterial ribosomal protein bL27 family. The N-terminus is cleaved by ribosomal processing cysteine protease Prp.

This Streptococcus thermophilus (strain CNRZ 1066) protein is Large ribosomal subunit protein bL27.